Reading from the N-terminus, the 162-residue chain is Meiosis-specific protein HED1 (162 aa).

The segment at K67–L124 is disordered. Basic and acidic residues predominate over residues D85–D94.

Interacts with RAD51.

The protein localises to the nucleus. It is found in the chromosome. Functionally, involved in regulation of meiotic recombination and repair of DNA damage. Inhibits RAD51-mediated recombination when the meiotic recombination machinery is impaired. This Saccharomyces cerevisiae (strain ATCC 204508 / S288c) (Baker's yeast) protein is Meiosis-specific protein HED1 (HED1).